Here is a 336-residue protein sequence, read N- to C-terminus: Glyceraldehyde-3-phosphate dehydrogenase (336 aa).

NAD(+)-binding positions include 12 to 13 (RI), D34, R78, and S120. D-glyceraldehyde 3-phosphate is bound by residues 151–153 (SCT) and T182. C152 (nucleophile) is an active-site residue. NAD(+) is bound at residue N183. Residues 211–212 (NG) and R234 contribute to the D-glyceraldehyde 3-phosphate site. N316 contributes to the NAD(+) binding site.

Belongs to the glyceraldehyde-3-phosphate dehydrogenase family. Homotetramer.

The protein localises to the cytoplasm. It catalyses the reaction D-glyceraldehyde 3-phosphate + phosphate + NAD(+) = (2R)-3-phospho-glyceroyl phosphate + NADH + H(+). The protein operates within carbohydrate degradation; glycolysis; pyruvate from D-glyceraldehyde 3-phosphate: step 1/5. In terms of biological role, catalyzes the oxidative phosphorylation of glyceraldehyde 3-phosphate (G3P) to 1,3-bisphosphoglycerate (BPG) using the cofactor NAD. The first reaction step involves the formation of a hemiacetal intermediate between G3P and a cysteine residue, and this hemiacetal intermediate is then oxidized to a thioester, with concomitant reduction of NAD to NADH. The reduced NADH is then exchanged with the second NAD, and the thioester is attacked by a nucleophilic inorganic phosphate to produce BPG. This chain is Glyceraldehyde-3-phosphate dehydrogenase (gap), found in Heyndrickxia coagulans (Weizmannia coagulans).